The sequence spans 539 residues: T-complex protein 1 subunit zeta (539 aa).

Belongs to the TCP-1 chaperonin family. Heterooligomeric complex of about 850 to 900 kDa that forms two stacked rings, 12 to 16 nm in diameter.

The protein resides in the cytoplasm. In terms of biological role, molecular chaperone; assists the folding of proteins upon ATP hydrolysis. Known to play a role, in vitro, in the folding of actin and tubulin. This chain is T-complex protein 1 subunit zeta (cct6), found in Dictyostelium discoideum (Social amoeba).